The sequence spans 175 residues: ADP-ribosylation factor 6 (175 aa).

Gly-2 carries N-myristoyl glycine lipidation. Lys-3 is lipidated: N6-myristoyl lysine. GTP-binding positions include 23-28 (AAGKTT), 41-44 (TIPT), 63-67 (DVGGQ), 122-125 (NKQD), and 155-156 (CA).

The protein belongs to the small GTPase superfamily. Arf family. Interacts (when activated) with GGA1, GGA2 and GGA3; the interaction is required for proper subcellular location of GGA1, GGA2 and GGA3. Interacts with PIP5K1C. Interacts with USP6 (via Rab-GAP TBC domain). Interacts with RAB11FIP3 and RAB11FIP4. Interacts with HERC1. Interacts with ARHGAP21. Interacts with ASAP3; the interaction is stabilized by calcium ions. Interacts with NCS1/FREQ at the plasma membrane. Interacts with TBC1D24. Interacts with ECPAS. Interacts with MICALL1. Interacts with SPAG9 homodimers, forming heterotetramers. Interacts with CYTH3. Interacts with ASAP2. Interacts with UACA. Interacts with KIF23, forming heterodimers and heterotetramers. Interacts with C9orf72. Interacts (GTP-bound form) with TJAP1/PILT. Interacts with PRKAA2. Interacts with CD36 (when palmitoylated); this interaction mediates CD36 transport from the Golgi to the plasma membrane. Interacts with APBB1. As to quaternary structure, (Microbial infection) Interacts with the V.cholerae enterotoxin subunit A1; this causes a conformation change so that the toxin can bind NAD and catalyze the ADP-ribosylation of Gs alpha. In terms of assembly, (Microbial infection) Interacts with EspG from enteropathogenic E.coli. (Microbial infection) Identified in a complex with RAB1A and EspG from enteropathogenic E.coli. As to quaternary structure, (Microbial infection) Interacts with human enterovirus 71 protein VP1. GTP-bound form is myristoylated on Lys-3 by NMT1 and NMT2, allowing ARF6 to remain on membranes during the GTPase cycle, thereby promoting its activity. GDP-bound inactive form is demyristoylated on Lys-3 by SIRT2 at early endosomes or endocytic recycling compartment to allow its efficient activation by a guanine exchange factor (GEF) after GDP release. Ubiquitous, with higher levels in heart, substantia nigra, and kidney.

It is found in the cytoplasm. Its subcellular location is the cytosol. The protein resides in the cell membrane. It localises to the endosome membrane. The protein localises to the recycling endosome membrane. It is found in the cell projection. Its subcellular location is the filopodium membrane. The protein resides in the ruffle. It localises to the cleavage furrow. The protein localises to the midbody. It is found in the midbody ring. Its subcellular location is the early endosome membrane. The protein resides in the golgi apparatus. It localises to the trans-Golgi network membrane. The enzyme catalyses GTP + H2O = GDP + phosphate + H(+). Activation is generally mediated by a guanine exchange factor (GEF), while inactivation through hydrolysis of bound GTP is catalyzed by a GTPase activating protein (GAP). Activated by ASAP3. Inactivated by ACAP1 and ACAP2. Activated by NGF via NTRK1. Activated by PRKAA2 through its C-terminal regulatory domain. Functionally, GTP-binding protein involved in protein trafficking that regulates endocytic recycling and cytoskeleton remodeling. GTP-bound form plays an important role in the transport of multiple palmitoylated proteins form the Golgi to the plasma membrane. Required for normal completion of mitotic cytokinesis. Plays a role in the reorganization of the actin cytoskeleton and the formation of stress fibers. Involved in the regulation of dendritic spine development, contributing to the regulation of dendritic branching and filopodia extension. Potentiates the neurite outgrowth in primary neurons by interacting with the molecular adapter APBB1. Plays an important role in membrane trafficking, during junctional remodeling and epithelial polarization. Regulates surface levels of adherens junction proteins such as CDH1. Required for NTRK1 sorting to the recycling pathway from early endosomes. Its function is as follows. (Microbial infection) Functions as an allosteric activator of the cholera toxin catalytic subunit, an ADP-ribosyltransferase. (Microbial infection) Plays a key role in the endocytosis of enterovirus 71 and thus viral entry into brain microvascular endothelial cells. The chain is ADP-ribosylation factor 6 from Homo sapiens (Human).